A 600-amino-acid polypeptide reads, in one-letter code: Leiomodin-1 (600 aa).

Position 12 is a phosphoserine (S12). Disordered stretches follow at residues V38 to G61, M80 to R324, and D472 to N573. Composition is skewed to basic and acidic residues over residues M80–R127, F134–K240, D247–K256, D263–E292, and D472–E497. A phosphoserine mark is found at S85 and S135. A run of 8 repeats spans residues A165–E180, R181–R196, N197–K212, E213–R228, N229–G244, N245–G260, N261–P276, and L277–K293. The interval A165 to K293 is 8 X approximate tandem repeats. A 5 X 4 AA approximate tandem repeats region spans residues S508–K527. 2 stretches are compositionally biased toward pro residues: residues K510–K522 and A532–P543. A Phosphoserine modification is found at S555. Positions S574–V593 constitute a WH2 domain.

Belongs to the tropomodulin family. In terms of tissue distribution, detected in lung vascular smooth muscle (at protein level). Detected in thyroid and extraocular smooth muscle, but not skeletal muscle. Detected in heart, aorta, skeletal muscle, colon, urinary bladder, uterus, stomach, and small intestine.

It is found in the cytoplasm. Its subcellular location is the myofibril. The protein resides in the sarcomere. It localises to the cytoskeleton. Required for proper contractility of visceral smooth muscle cells. Mediates nucleation of actin filaments. The protein is Leiomodin-1 (LMOD1) of Homo sapiens (Human).